The chain runs to 685 residues: DNA-directed RNA polymerase subunit beta' (685 aa).

Zn(2+) is bound by residues cysteine 69, cysteine 71, cysteine 87, and cysteine 90. Aspartate 489, aspartate 491, and aspartate 493 together coordinate Mg(2+).

Belongs to the RNA polymerase beta' chain family. RpoC1 subfamily. In plastids the minimal PEP RNA polymerase catalytic core is composed of four subunits: alpha, beta, beta', and beta''. When a (nuclear-encoded) sigma factor is associated with the core the holoenzyme is formed, which can initiate transcription. It depends on Mg(2+) as a cofactor. Zn(2+) serves as cofactor.

The protein resides in the plastid. It localises to the chloroplast. It carries out the reaction RNA(n) + a ribonucleoside 5'-triphosphate = RNA(n+1) + diphosphate. Its function is as follows. DNA-dependent RNA polymerase catalyzes the transcription of DNA into RNA using the four ribonucleoside triphosphates as substrates. This chain is DNA-directed RNA polymerase subunit beta', found in Gossypium hirsutum (Upland cotton).